Here is a 318-residue protein sequence, read N- to C-terminus: uncharacterized protein (318 aa).

A helical membrane pass occupies residues 2-22 (ILELIIVLVLLVLAFKSLKIL). A disordered region spans residues 295 to 318 (SDPEDKGVSEVETESQPAEKPEKH).

The protein belongs to the band 7/mec-2 family.

The protein localises to the membrane. This is an uncharacterized protein from Methanothermobacter thermautotrophicus (strain ATCC 29096 / DSM 1053 / JCM 10044 / NBRC 100330 / Delta H) (Methanobacterium thermoautotrophicum).